Reading from the N-terminus, the 142-residue chain is Large ribosomal subunit protein uL13 (142 aa).

This sequence belongs to the universal ribosomal protein uL13 family. As to quaternary structure, part of the 50S ribosomal subunit.

In terms of biological role, this protein is one of the early assembly proteins of the 50S ribosomal subunit, although it is not seen to bind rRNA by itself. It is important during the early stages of 50S assembly. In Pectobacterium carotovorum subsp. carotovorum (strain PC1), this protein is Large ribosomal subunit protein uL13.